The primary structure comprises 215 residues: Cytochrome b6 (215 aa).

The helical transmembrane segment at 32 to 52 (IFYCLGGITLTCFLVQVATGF) threads the bilayer. Cysteine 35 provides a ligand contact to heme c. Positions 86 and 100 each coordinate heme b. The next 3 helical transmembrane spans lie at 90–110 (ASMMVLMMILHVFRVYLTGGF), 116–136 (LTWVTGVVLGVLTASFGVTGY), and 186–206 (LHTFVLPLLTAVFMLMHFPMI). Positions 187 and 202 each coordinate heme b.

It belongs to the cytochrome b family. PetB subfamily. As to quaternary structure, the 4 large subunits of the cytochrome b6-f complex are cytochrome b6, subunit IV (17 kDa polypeptide, PetD), cytochrome f and the Rieske protein, while the 4 small subunits are PetG, PetL, PetM and PetN. The complex functions as a dimer. It depends on heme b as a cofactor. Requires heme c as cofactor.

The protein localises to the plastid. It localises to the chloroplast thylakoid membrane. Functionally, component of the cytochrome b6-f complex, which mediates electron transfer between photosystem II (PSII) and photosystem I (PSI), cyclic electron flow around PSI, and state transitions. The chain is Cytochrome b6 from Jasminum nudiflorum (Winter jasmine).